The following is a 124-amino-acid chain: Ribonuclease pancreatic (124 aa).

The span at Lys1–Pro15 shows a compositional bias: basic and acidic residues. The disordered stretch occupies residues Lys1–Asn24. Substrate-binding residues include Lys7 and Arg10. His12 serves as the catalytic Proton acceptor. 2 N-linked (GlcNAc...) asparagine glycosylation sites follow: Asn21 and Asn34. Disulfide bonds link Cys26-Cys84, Cys40-Cys95, Cys58-Cys110, and Cys65-Cys72. Residues Lys41 to Thr45 and Lys66 contribute to the substrate site. A glycan (N-linked (GlcNAc...) asparagine) is linked at Asn76. Arg85 contacts substrate. The active-site Proton donor is the His119.

The protein belongs to the pancreatic ribonuclease family. Monomer. Interacts with and forms tight 1:1 complexes with RNH1. Dimerization of two such complexes may occur. Interaction with RNH1 inhibits this protein. As to expression, pancreas.

Its subcellular location is the secreted. It catalyses the reaction an [RNA] containing cytidine + H2O = an [RNA]-3'-cytidine-3'-phosphate + a 5'-hydroxy-ribonucleotide-3'-[RNA].. The enzyme catalyses an [RNA] containing uridine + H2O = an [RNA]-3'-uridine-3'-phosphate + a 5'-hydroxy-ribonucleotide-3'-[RNA].. In terms of biological role, endonuclease that catalyzes the cleavage of RNA on the 3' side of pyrimidine nucleotides. Acts on single-stranded and double-stranded RNA. The chain is Ribonuclease pancreatic (RNASE1) from Sus scrofa (Pig).